The chain runs to 203 residues: Monothiol glutaredoxin-7 (203 aa).

Positions Met1–Ala32 are cleaved as a signal peptide. The region spanning Ala88–Ala191 is the Glutaredoxin domain. Cys108 is a binding site for [2Fe-2S] cluster.

This sequence belongs to the glutaredoxin family. Monothiol subfamily.

The protein is Monothiol glutaredoxin-7 (GRX7) of Saccharomyces cerevisiae (strain ATCC 204508 / S288c) (Baker's yeast).